A 326-amino-acid polypeptide reads, in one-letter code: Cathepsin L-like proteinase (326 aa).

The first 15 residues, 1-15 (MRLFILAVLTVGVLG), serve as a signal peptide directing secretion. Residues 16–106 (SNDDLWHQWK…HGVPYEANNR (91 aa)) constitute a propeptide, activation peptide. At Pro-109 the chain carries 3-hydroxyproline; partial. 3 cysteine pairs are disulfide-bonded: Cys-129–Cys-172, Cys-163–Cys-204, and Cys-262–Cys-311. The active site involves Cys-132. Pro-196 carries the 3-hydroxyproline; partial modification. Catalysis depends on residues His-269 and Asn-289.

Belongs to the peptidase C1 family. As to quaternary structure, monomer. Contains cysteine residues involved in intramolecular disulfide bonding.

It localises to the secreted. Its activity is regulated as follows. Strongly inhibited by Antipain, E64 and Leupeptin, and weakly inhibited by iodoacetic acid (IAA) and phenylmethylsulfonyl fluoride (PMSF). Requires the presence of dithiothreitol (DTT) for activity. In terms of biological role, thiol protease. Probably involved in interaction with host tissues. Displays a similar activity to that of papain. Has high activity on Z-Phe-Arg-NHMec, but no activity on Z-Arg-NHMec. In Fasciola hepatica (Liver fluke), this protein is Cathepsin L-like proteinase.